We begin with the raw amino-acid sequence, 275 residues long: 3-methyl-2-oxobutanoate hydroxymethyltransferase (275 aa).

Mg(2+)-binding residues include Asp-44 and Asp-83. 3-methyl-2-oxobutanoate-binding positions include 44–45, Asp-83, and Lys-113; that span reads DS. Glu-115 is a binding site for Mg(2+). The active-site Proton acceptor is Glu-182.

This sequence belongs to the PanB family. In terms of assembly, homodecamer; pentamer of dimers. It depends on Mg(2+) as a cofactor.

The protein localises to the cytoplasm. The enzyme catalyses 3-methyl-2-oxobutanoate + (6R)-5,10-methylene-5,6,7,8-tetrahydrofolate + H2O = 2-dehydropantoate + (6S)-5,6,7,8-tetrahydrofolate. Its pathway is cofactor biosynthesis; (R)-pantothenate biosynthesis; (R)-pantoate from 3-methyl-2-oxobutanoate: step 1/2. In terms of biological role, catalyzes the reversible reaction in which hydroxymethyl group from 5,10-methylenetetrahydrofolate is transferred onto alpha-ketoisovalerate to form ketopantoate. The chain is 3-methyl-2-oxobutanoate hydroxymethyltransferase from Clostridium novyi (strain NT).